A 198-amino-acid polypeptide reads, in one-letter code: Dual specificity protein phosphatase 1 (198 aa).

The segment at 1-20 (MSSRDRGSPSSSSSSSSLPG) is disordered. Over residues 8–17 (SPSSSSSSSS) the composition is skewed to low complexity. The segment at 26-47 (EKVKNQIQALVRVIKVARTYRD) is caM binding domain 1. In terms of domain architecture, Tyrosine-protein phosphatase spans 50 to 191 (VPSLIEQGLY…LQDLEKSMQV (142 aa)). The active-site Phosphocysteine intermediate is the Cys-135. Residues 151 to 180 (MKKHGMTLAQALQHVKSKRPVASPNAGFIR) are caM binding domain 2.

The protein belongs to the protein-tyrosine phosphatase family. Non-receptor class dual specificity subfamily. As to quaternary structure, interacts with calmodulin (CaM) in a calcium Ca(2+)-dependent manner. Expressed in roots, stems, leaves and flowers.

The protein localises to the nucleus. It is found in the cytoplasm. The catalysed reaction is O-phospho-L-tyrosyl-[protein] + H2O = L-tyrosyl-[protein] + phosphate. It carries out the reaction O-phospho-L-seryl-[protein] + H2O = L-seryl-[protein] + phosphate. It catalyses the reaction O-phospho-L-threonyl-[protein] + H2O = L-threonyl-[protein] + phosphate. Inhibited by sodium vanadate and sodium tungstate. NaF and spermifine repress specifically phosphoserine and phosphothreonine phosphatase activity. Functionally, has a dual specificity toward Ser/Thr and Tyr-containing proteins. Dephosphorylates MPK4 in vitro. The protein is Dual specificity protein phosphatase 1 (DSPTP1) of Arabidopsis thaliana (Mouse-ear cress).